Here is a 108-residue protein sequence, read N- to C-terminus: UPF0060 membrane protein Sputw3181_1172 (108 aa).

4 consecutive transmembrane segments (helical) span residues 3 to 23 (VITTLGLFIITAIAEIVGCYL), 31 to 51 (GASAWVLLPAAISLALFAWLL), 63 to 83 (AAYGGVYVTIAIVWLWGVDGI), and 87 to 107 (RWDLAGVVLMLAGMAVIMFAP).

It belongs to the UPF0060 family.

The protein resides in the cell inner membrane. This is UPF0060 membrane protein Sputw3181_1172 from Shewanella sp. (strain W3-18-1).